Here is an 851-residue protein sequence, read N- to C-terminus: Pre-mRNA-splicing factor syf1 (851 aa).

HAT repeat units lie at residues 12–44 (YLIADNDSVYEQDLLRNPGTIKPWLAYIEYKQQ), 63–95 (ISILNDFQVMERACKQLPRSYKLWKMYLEFRTK), 107–139 (AEFQKVNTLFERALILLNKMPRIWEMYLTFMLQ), 141–175 (PLVTQTRRTFDRALRALPVTQHNRIWKLYKTFARS), 291–326 (GNFEKARDVFEEGITTVMTVRDFTLIFDSYVEFEES), 398–432 (EIVNTYTAAIAAINPKKAVGKFSELWVNYAKFYER), 434–470 (GDLDTARIIFEKAVKVPFKSVNELAETWCEWAEMELR), 487–519 (APKKSTVDYFDETLSPQQRIHKSWKLWSFYVDL), 558–592 (KYFEESFKVYERGLDLFTYPVAFELWNLYLTKAVD), 595–629 (IGIERLRDLFEQALDGCPPKFARPLYLMYGNLEEE), 667–701 (FGLPSTRPIYERAIAALPDHEAKEMCLKFAEMERR), and 703–737 (GEIDRARAIYGHASQFCDPRTNAPFWQKWEAFEVQ). 2 disordered regions span residues 771–793 (ARSQQRAPEGEEATAAAEREMDT) and 810–851 (IGFV…MEAD). Residues 825–841 (APPAGQGPVAAPANPDA) show a composition bias toward low complexity. Positions 842–851 (IDLDDDMEAD) are enriched in acidic residues.

Belongs to the crooked-neck family. Associated with the spliceosome.

It is found in the nucleus. Its function is as follows. Involved in pre-mRNA splicing and cell cycle progression. In Emericella nidulans (strain FGSC A4 / ATCC 38163 / CBS 112.46 / NRRL 194 / M139) (Aspergillus nidulans), this protein is Pre-mRNA-splicing factor syf1 (syf1).